Reading from the N-terminus, the 545-residue chain is ATP synthase subunit alpha (545 aa).

An ATP-binding site is contributed by 173 to 180 (GDRKTGKT).

This sequence belongs to the ATPase alpha/beta chains family. In terms of assembly, F-type ATPases have 2 components, CF(1) - the catalytic core - and CF(0) - the membrane proton channel. CF(1) has five subunits: alpha(3), beta(3), gamma(1), delta(1), epsilon(1). CF(0) has three main subunits: a(1), b(2) and c(9-12). The alpha and beta chains form an alternating ring which encloses part of the gamma chain. CF(1) is attached to CF(0) by a central stalk formed by the gamma and epsilon chains, while a peripheral stalk is formed by the delta and b chains.

The protein resides in the cell membrane. It catalyses the reaction ATP + H2O + 4 H(+)(in) = ADP + phosphate + 5 H(+)(out). In terms of biological role, produces ATP from ADP in the presence of a proton gradient across the membrane. The alpha chain is a regulatory subunit. This is ATP synthase subunit alpha from Renibacterium salmoninarum (strain ATCC 33209 / DSM 20767 / JCM 11484 / NBRC 15589 / NCIMB 2235).